A 301-amino-acid chain; its full sequence is Ribosomal RNA small subunit methyltransferase A (301 aa).

The S-adenosyl-L-methionine site is built by Asn29, Leu31, Gly56, Glu77, Asp102, and Asn127.

Belongs to the class I-like SAM-binding methyltransferase superfamily. rRNA adenine N(6)-methyltransferase family. RsmA subfamily.

The protein resides in the cytoplasm. The catalysed reaction is adenosine(1518)/adenosine(1519) in 16S rRNA + 4 S-adenosyl-L-methionine = N(6)-dimethyladenosine(1518)/N(6)-dimethyladenosine(1519) in 16S rRNA + 4 S-adenosyl-L-homocysteine + 4 H(+). Specifically dimethylates two adjacent adenosines (A1518 and A1519) in the loop of a conserved hairpin near the 3'-end of 16S rRNA in the 30S particle. May play a critical role in biogenesis of 30S subunits. The protein is Ribosomal RNA small subunit methyltransferase A of Halothermothrix orenii (strain H 168 / OCM 544 / DSM 9562).